We begin with the raw amino-acid sequence, 258 residues long: Imidazole glycerol phosphate synthase subunit HisF (258 aa).

Residues Asp11 and Asp130 contribute to the active site.

It belongs to the HisA/HisF family. In terms of assembly, heterodimer of HisH and HisF.

Its subcellular location is the cytoplasm. The catalysed reaction is 5-[(5-phospho-1-deoxy-D-ribulos-1-ylimino)methylamino]-1-(5-phospho-beta-D-ribosyl)imidazole-4-carboxamide + L-glutamine = D-erythro-1-(imidazol-4-yl)glycerol 3-phosphate + 5-amino-1-(5-phospho-beta-D-ribosyl)imidazole-4-carboxamide + L-glutamate + H(+). The protein operates within amino-acid biosynthesis; L-histidine biosynthesis; L-histidine from 5-phospho-alpha-D-ribose 1-diphosphate: step 5/9. Functionally, IGPS catalyzes the conversion of PRFAR and glutamine to IGP, AICAR and glutamate. The HisF subunit catalyzes the cyclization activity that produces IGP and AICAR from PRFAR using the ammonia provided by the HisH subunit. The protein is Imidazole glycerol phosphate synthase subunit HisF of Methylorubrum extorquens (strain CM4 / NCIMB 13688) (Methylobacterium extorquens).